The sequence spans 233 residues: Esterase FUS5 (233 aa).

Residues S105, D159, and H187 each act as charge relay system in the active site.

This sequence belongs to the LovG family.

Esterase; part of the gene cluster that mediates the biosynthesis of the mycotoxin fusarin C. Within the cluster, FUS1, FUS2, FUS8 and FUS9 are sufficient for fusarin production. The other FUS cluster members are not essential for fusarin C biosynthesis. The chain is Esterase FUS5 from Gibberella moniliformis (strain M3125 / FGSC 7600) (Maize ear and stalk rot fungus).